The sequence spans 594 residues: UvrABC system protein C (594 aa).

The region spanning 14–91 (DSPGCYLHKD…IQENMPKYNI (78 aa)) is the GIY-YIG domain. A UVR domain is found at 196–231 (DKIIDDLRSKMLEASHNQEFERAAEYRDLISGIATM).

The protein belongs to the UvrC family. Interacts with UvrB in an incision complex.

The protein resides in the cytoplasm. The UvrABC repair system catalyzes the recognition and processing of DNA lesions. UvrC both incises the 5' and 3' sides of the lesion. The N-terminal half is responsible for the 3' incision and the C-terminal half is responsible for the 5' incision. In Streptococcus equi subsp. zooepidemicus (strain H70), this protein is UvrABC system protein C.